Here is a 348-residue protein sequence, read N- to C-terminus: MTTEKTVVFVSGATGFIALHVVDDLLKTGYKVIGSGRSQEKNDGLLKKFKSNPNLSMEIVEDIAAPNAFDKVFQKHGKEIKVVLHIASPVHFNTTDFEKDLLIPAVNGTKSILEAIKNYAADTVEKVVITSSVAALASPGDMKDTSFVVNEESWNKDTWESCQANAVSAYCGSKKFAEKTAWDFLEENQSSIKFTLSTINPGFVFGPQLFADSLRNGINSSSAIIANLVSYKLGDNFYNYSGPFIDVRDVSKAHLLAFEKPECAGQRLFLCEDMFCSQEALDILNEEFPQLKGKIATGEPGSGSTFLTKNCCKCDNRKTKNLLGFQFNKFRDCIVDTASQLLEVQSKS.

NADP(+) is bound by residues Lys41 and Tyr170. Position 339 is a phosphoserine (Ser339).

Belongs to the NAD(P)-dependent epimerase/dehydratase family. Dihydroflavonol-4-reductase subfamily.

This is an uncharacterized protein from Saccharomyces cerevisiae (strain ATCC 204508 / S288c) (Baker's yeast).